The following is a 455-amino-acid chain: Adenylosuccinate synthetase isozyme 2 (455 aa).

Residues 1–25 (MSDSGDAQPQDGGNSSSSRGKSPSV) form a disordered region. Over residues 12-25 (GGNSSSSRGKSPSV) the composition is skewed to low complexity. GTP contacts are provided by residues 38–44 (GDEGKGK) and 66–68 (GHT). The active-site Proton acceptor is Asp39. Mg(2+) is bound by residues Asp39 and Gly66. Residue Asp39 participates in substrate binding. IMP-binding positions include 39–42 (DEGK), 64–67 (NAGH), Thr161, Arg175, Asn254, Thr269, and Arg333. His67 functions as the Proton donor in the catalytic mechanism. Substrate is bound at residue 329-335 (VTTGRKR). Residues Arg335, 361–363 (KLD), and 443–446 (GVGK) each bind GTP.

Belongs to the adenylosuccinate synthetase family. In terms of assembly, homodimer. It depends on Mg(2+) as a cofactor.

Its subcellular location is the cytoplasm. It localises to the mitochondrion. It carries out the reaction IMP + L-aspartate + GTP = N(6)-(1,2-dicarboxyethyl)-AMP + GDP + phosphate + 2 H(+). The protein operates within purine metabolism; AMP biosynthesis via de novo pathway; AMP from IMP: step 1/2. Its activity is regulated as follows. Inhibited competitively by AMP and IMP and non-competitively by fructose 1,6-bisphosphate. Plays an important role in the de novo pathway and in the salvage pathway of purine nucleotide biosynthesis. Catalyzes the first committed step in the biosynthesis of AMP from IMP. This is Adenylosuccinate synthetase isozyme 2 (adss2) from Danio rerio (Zebrafish).